The following is a 60-amino-acid chain: Conotoxin PnMRCL-022 (60 aa).

A signal peptide spans Met1–Ala22. The propeptide occupies Arg23 to Ser45.

It belongs to the conotoxin T superfamily. In terms of processing, contains 2 disulfide bonds that can be either 'C1-C3, C2-C4' or 'C1-C4, C2-C3', since these disulfide connectivities have been observed for conotoxins with cysteine framework V (for examples, see AC P0DQQ7 and AC P81755). As to expression, expressed by the venom duct.

It localises to the secreted. The chain is Conotoxin PnMRCL-022 from Conus pennaceus (Feathered cone).